A 420-amino-acid chain; its full sequence is Cyclin-B2-1 (420 aa).

The segment at 1–61 (MDRASENRRL…EKSGKEEQKP (61 aa)) is disordered. The span at 49–60 (PMLEKSGKEEQK) shows a compositional bias: basic and acidic residues.

It belongs to the cyclin family. Cyclin AB subfamily. As to quaternary structure, interacts with CDKB2-1. Expressed in the root apices.

Its function is as follows. Involved in the control of the cell cycle at the G2/M (mitosis) transition. May activate CDKB2-1 kinase. This Oryza sativa subsp. japonica (Rice) protein is Cyclin-B2-1 (CYCB2-1).